Here is a 386-residue protein sequence, read N- to C-terminus: All-trans-retinol dehydrogenase [NAD(+)] ADH7 (386 aa).

Position 59 (cysteine 59) interacts with Zn(2+). 60–64 (RTDDH) is a binding site for NAD(+). Residues histidine 80, cysteine 110, cysteine 113, cysteine 116, cysteine 124, and cysteine 186 each contribute to the Zn(2+) site. NAD(+)-binding positions include 211-216 (GLGGVG), aspartate 235, lysine 240, 281-283 (IGH), 304-306 (VGV), 329-331 (CVF), and arginine 381.

The protein belongs to the zinc-containing alcohol dehydrogenase family. Class-IV subfamily. In terms of assembly, homodimer. Zn(2+) is required as a cofactor. In terms of tissue distribution, preferentially expressed in stomach.

The protein localises to the cytoplasm. The enzyme catalyses a primary alcohol + NAD(+) = an aldehyde + NADH + H(+). It catalyses the reaction 10-hydroxydecanoate + NAD(+) = 10-oxodecanoate + NADH + H(+). The catalysed reaction is all-trans-retinol + NAD(+) = all-trans-retinal + NADH + H(+). It carries out the reaction 9-cis-retinol + NAD(+) = 9-cis-retinal + NADH + H(+). The enzyme catalyses all-trans-3,4-didehydroretinol + NAD(+) = all-trans-3,4-didehydroretinal + NADH + H(+). It catalyses the reaction all-trans-4-hydroxyretinol + NAD(+) = all-trans-4-hydroxyretinal + NADH + H(+). The catalysed reaction is all-trans-4-oxoretinol + NAD(+) = all-trans-4-oxoretinal + NADH + H(+). It carries out the reaction 12-hydroxydodecanoate + NAD(+) = 12-oxododecanoate + NADH + H(+). The enzyme catalyses 16-hydroxyhexadecanoate + NAD(+) = 16-oxohexadecanoate + NADH + H(+). It catalyses the reaction hexan-1-ol + NAD(+) = hexanal + NADH + H(+). The catalysed reaction is (E)-hex-2-en-1-ol + NAD(+) = (E)-hex-2-enal + NADH + H(+). It carries out the reaction (E)-4-hydroxynon-2-en-1-ol + NAD(+) = (E)-4-hydroxynon-2-enal + NADH + H(+). Retinol oxidation is inhibited by the detergent Tween 80. Ethanol inhibits both all-trans-retinol and 9-cis-retinol oxidation. 13-cis-retinol is an effective competitive inhibitor of the 9-cis-retinol oxidation. All-trans-retinoic acid is a powerful inhibitor of all-trans-retinol oxidation. 13-cis-retinoic acid is a powerful inhibitor of all-trans-retinol oxidation. Cimetidine competitively inhibited ethanol oxidation. Functionally, catalyzes the NAD-dependent oxidation of all-trans-retinol, alcohol, and omega-hydroxy fatty acids and their derivatives. Oxidizes preferentially all trans-retinol, all-trans-4-hydroxyretinol, 9-cis-retinol, 2-hexenol, and long chain omega-hydroxy fatty acids such as juniperic acid. In vitro can also catalyze the NADH-dependent reduction of all-trans-retinal and aldehydes and their derivatives. Reduces preferentially all trans-retinal, all-trans-4-oxoretinal and hexanal. Catalyzes in the oxidative direction with higher efficiency. Therefore may participate in retinoid metabolism, fatty acid omega-oxidation, and elimination of cytotoxic aldehydes produced by lipid peroxidation. This Homo sapiens (Human) protein is All-trans-retinol dehydrogenase [NAD(+)] ADH7.